Here is a 1503-residue protein sequence, read N- to C-terminus: MMAGEGSTITSRIKNLLRSPSIKLRRSKAGNRREDLSSKVTLEKVLGVTVSGGRGLACDPRSGLVAYSAGCVVVLFNPRKHKQHHILNSSRKTITALAFSPDGKYLVTGESGHMPAVRVWDVAERSQVAELQEHKYGVACVAFSPSAKYIVSVGYQHDMIVNVWAWKKNIVVASNKVSSRVTAVSFSEDCSYFVTAGNRHIKFWYLDDSKTSKVNATVPLLGRSGLLGELRNNLFTDVACGRGEKADSTFCITSSGLLCEFSDRRLLDKWVELRTTVAHCISVTQEYIFCGCADGTVRLFNPSNLHFLSTLPRPHALGTDIASITEASRLFSGGVNARYPDTIALTFDPTNQWLSCVYNDHSIYVWDVRDPKKVGKVYSALYHSSCVWSVEVYPEIKDSHQACLPPSSFITCSSDNTIRLWNTESSGVHGSTLHRNILSNDLIKIIYVDGNTQALLDTELPGGDKADGSLMDPRVGIRSVCISPNGQHLASGDRMGTLRIHELQSLSEMLKVEAHDSEILCLEYSKPDTGLKLLASASRDRLIHVLDAGREYSLQQTLDEHSSSITAVKFAASDGQVRMISCGADKSIYFRTAQKSGEGVQFTRTHHVVRKTTLYDMDVEPSWKYTAIGCQDRNIRIFNISSGKQKKLFKGSQGEDGTLIKVQTDPSGIYIATSCSDKNLSIFDFSSGECVATMFGHSEIVTGMKFSNDCKHLISVSGDSCIFVWRLSSEMTISMRQRLAELRQRQRGIKQQGPTSPQRASGAKQHHAPVVPPSGPALSSDSDKEGEDEGTEEEELPALPILSKSTKKELASGSSPALLRSLSHWEMSRAQETMEYLDPAPVANTGPKRRGRWAQPGVELSVRSMLDLRQIETLAPSPRGPSQDSLAVSPAGPGKHGPQGPELSCVSQNERAPRLQTSQPCSCPHIIQLLSQEEGVFAQDLEPAPIEDGIVYPEPSDSPTMDTSAFQVQAPTGGSLGRMYPGSRGSEKHSPDSACSVDYSSSRLSSPEHPNEDSESTEPLSVDGISSDLEEPAEGDEDEEEEGGTGLCGLQEGGPHTPDQEQFLKQHFETLANGTAPGGPARVLERTESQSISSRFLLQVQTSPLREPSLSSSGLALTSRPDQVSQVSGEQLKGSGATPPGAPPEMEPSSGNSGPKQVAPVLLTRRHNNLDNSWASKKMAATRPLAGLQKAQSVHSLVPQDEVPSSRPLLFQEAETQGSLGSLPQAGGCSSQPHSYQNHTTSSMAKLARSISVGENPGLATEPQAPVPIRISPFNKLALPSRAHLVLDIPKPLPDRPTLTTFSPVSKGLAHNETEQSGPLVSLGKAHTTVEKHSCLGEGTTHKSRTECQAYPGPNHPCAQQLPVNNLLQGPESLQPLSPEKTRNPVESSRPGVALSQDSELALSLQQCEQLVAELQGNVRQAVELYRAVTSYKTPSAEQSHITRLLRDTFSSVRQELEVLAGAVLSSPGGSPGAVGAEQTQALLEQYSELLLRAVERRMERRL.

12 WD repeats span residues 89 to 130, 133 to 174, 176 to 214, 271 to 310, 337 to 376, 382 to 431, 472 to 511, 514 to 556, 560 to 601, 609 to 648, 654 to 693, and 696 to 735; these read SSRK…QVAE, EHKY…VVAS, KVSS…TSKV, VELR…FLST, ARYP…KVGK, YHSS…VHGS, DPRV…EMLK, AHDS…SLQQ, EHSS…EGVQ, VRKT…QKKL, GEDG…CVAT, and GHSE…TISM. 3 disordered regions span residues 745–817, 874–917, and 951–1176; these read RQRG…SSPA, LAPS…RLQT, and VYPE…SWAS. Over residues 784-796 the composition is skewed to acidic residues; the sequence is KEGEDEGTEEEEL. Composition is skewed to polar residues over residues 905–917 and 957–972; these read CVSQ…RLQT and DSPT…QAPT. Residues 1028-1043 are compositionally biased toward acidic residues; that stretch reads DLEEPAEGDEDEEEEG. A compositionally biased stretch (basic and acidic residues) spans 1058–1068; the sequence is PDQEQFLKQHF. Residues 1089-1129 are compositionally biased toward polar residues; it reads SQSISSRFLLQVQTSPLREPSLSSSGLALTSRPDQVSQVSG. At Ser1193 the chain carries Phosphoserine. Disordered regions lie at residues 1217–1238 and 1369–1391; these read QGSL…SYQN and QGPE…SSRP.

In terms of assembly, can form homodimers (via C-terminus). Interacts (via C-terminus) with WDR62 (via C-terminus). Interacts with MAPK9. Interacts (via N-terminus) with NOD2; the interaction is enhanced in presence of muramyl dipeptide (MDP). Interacts with MAPK10. Ubiquitously expressed. Highest expression observed in brain.

It localises to the cytoplasm. The protein resides in the nucleus. It is found in the cytoskeleton. The protein localises to the spindle pole. Its function is as follows. Negative regulator of NOD2 function. It down-regulates NOD2-induced processes such as activation of NF-kappa-B signaling, IL8 secretion and antibacterial response. Involved in JNK signaling pathway. The protein is Mitogen-activated protein kinase-binding protein 1 (Mapkbp1) of Mus musculus (Mouse).